A 197-amino-acid polypeptide reads, in one-letter code: MYB-like transcription factor EOBII (197 aa).

HTH myb-type domains are found at residues 10–62 and 63–117; these read DAEV…LNYL and RPDV…QKHI. 2 DNA-binding regions (H-T-H motif) span residues 38–62 and 90–113; these read WNSL…LNYL and WSKI…RTRI. The disordered stretch occupies residues 125–158; sequence GQAASSEQNDHQEACTSQMSNGPNDNTIDQTYSP. Positions 138-158 are enriched in polar residues; that stretch reads ACTSQMSNGPNDNTIDQTYSP.

In terms of tissue distribution, specifically expressed in flowers, mostly in stigmas, petal tubes and petal limbs, and, to a lower extent, in anthers and stamen. Also present at low levels in roots, stems, leaves and sepals.

The protein localises to the nucleus. In terms of biological role, MYB-type transcription factor controlling the production of volatile organic compounds (VOCs), including floral volatile benzenoids and phenylpropanoids (FVBP), in flowers of fragrant cultivars (e.g. cv. Mitchell and cv. V26) by regulating the expression of ODO1 and EOBI, key regulators of the shikimate pathway, and of several biosynthetic floral scent-related genes including IGS, PAL2 and CFAT. This scent, mostly produced in the evening and night by the petals, attracts the pollinators (e.g. the night-active hawkmoth pollinator Manduca sexta). Binds to and activates the ODO1 and EOBI promoters via MYB binding sites (MBS) 5'-AAACCTAAT-3' and 5'-CTAACT-3'. Regulates the promoters of IGS1, CFAT and PAL2. Controls flowers petal opening by modulating a global transcriptomic switch. The polypeptide is MYB-like transcription factor EOBII (Petunia hybrida (Petunia)).